Consider the following 524-residue polypeptide: Bifunctional purine biosynthesis protein PurH (524 aa).

The 145-residue stretch at 1-145 (MIQQALLSVS…KNHRDVTVIV (145 aa)) folds into the MGS-like domain.

This sequence belongs to the PurH family.

The enzyme catalyses (6R)-10-formyltetrahydrofolate + 5-amino-1-(5-phospho-beta-D-ribosyl)imidazole-4-carboxamide = 5-formamido-1-(5-phospho-D-ribosyl)imidazole-4-carboxamide + (6S)-5,6,7,8-tetrahydrofolate. The catalysed reaction is IMP + H2O = 5-formamido-1-(5-phospho-D-ribosyl)imidazole-4-carboxamide. It participates in purine metabolism; IMP biosynthesis via de novo pathway; 5-formamido-1-(5-phospho-D-ribosyl)imidazole-4-carboxamide from 5-amino-1-(5-phospho-D-ribosyl)imidazole-4-carboxamide (10-formyl THF route): step 1/1. The protein operates within purine metabolism; IMP biosynthesis via de novo pathway; IMP from 5-formamido-1-(5-phospho-D-ribosyl)imidazole-4-carboxamide: step 1/1. The chain is Bifunctional purine biosynthesis protein PurH from Ralstonia pickettii (strain 12J).